Reading from the N-terminus, the 353-residue chain is DNA-directed RNA polymerase subunit alpha (353 aa).

Positions 1 to 245 (MEKIQKITYK…AHFQIIGNIN (245 aa)) are alpha N-terminal domain (alpha-NTD). The interval 261 to 353 (EREIKSTTPI…QLNNSEEGEE (93 aa)) is alpha C-terminal domain (alpha-CTD).

This sequence belongs to the RNA polymerase alpha chain family. In terms of assembly, homodimer. The RNAP catalytic core consists of 2 alpha, 1 beta, 1 beta' and 1 omega subunit. When a sigma factor is associated with the core the holoenzyme is formed, which can initiate transcription.

It carries out the reaction RNA(n) + a ribonucleoside 5'-triphosphate = RNA(n+1) + diphosphate. DNA-dependent RNA polymerase catalyzes the transcription of DNA into RNA using the four ribonucleoside triphosphates as substrates. This chain is DNA-directed RNA polymerase subunit alpha, found in Mycoplasma sp.